The chain runs to 259 residues: uncharacterized protein (259 aa).

6 helical membrane passes run 9–31 (ILSVLTLFIFFQYVAKFGILESL), 84–106 (LLGGEILDGLAFGFFFLVYLQWF), 126–148 (FLIYRFAITLFGSTICFYRFVFG), 153–175 (SIVAGILTFALFLSQRALNLEYV), 196–215 (HFILSAPAMGVGATAGYIAA), and 230–252 (TFRAFLLLTIVVVCILTLGSWLG).

The protein localises to the cell membrane. This is an uncharacterized protein from Archaeoglobus fulgidus (strain ATCC 49558 / DSM 4304 / JCM 9628 / NBRC 100126 / VC-16).